We begin with the raw amino-acid sequence, 96 residues long: Fruit-specific protein (96 aa).

3 disulfides stabilise this stretch: Cys-59–Cys-75, Cys-63–Cys-78, and Cys-69–Cys-92.

Fruit specific.

This is Fruit-specific protein (2A11) from Solanum lycopersicum (Tomato).